The primary structure comprises 924 residues: Phosphatidate phosphatase LPIN1 (924 aa).

The interval 1–108 (MNYVGQLAGQ…IPMYLATSPI (108 aa)) is N-LIP. A phosphoserine mark is found at S106 and S150. 2 disordered regions span residues 133–248 (PTTA…DCQR) and 269–297 (FHAS…ADRL). A compositionally biased stretch (basic residues) spans 152–161 (GKKRRKRRRK). A Nuclear localization signal motif is present at residues 153 to 158 (KKRRKR). Residues 162-172 (AQLDNLKRDDN) are compositionally biased toward basic and acidic residues. The span at 176 to 193 (SEDEDMFPIEMSSDEDTA) shows a compositional bias: acidic residues. Composition is skewed to polar residues over residues 218–229 (PSISTHPQSASY) and 273–284 (ESPSGSRPSTPK). A phosphoserine mark is found at S285, S287, and S293. Positions 285–297 (SDSELVSKSADRL) are enriched in basic and acidic residues. At T298 the chain carries Phosphothreonine. Disordered stretches follow at residues 314–426 (QAAK…SRHL) and 446–490 (LYFP…STSD). The residue at position 328 (S328) is a Phosphoserine. Residues 343-358 (AIHSESSDTFSDQSPT) are compositionally biased toward polar residues. S392 is modified (phosphoserine). The span at 404 to 413 (NTAQSSSKTD) shows a compositional bias: polar residues. Position 459 is an N6-acetyllysine (K459). A compositionally biased stretch (polar residues) spans 461–476 (ASDNGARSANQSPQSV). A phosphoserine mark is found at S468, S472, and S483. Glycyl lysine isopeptide (Lys-Gly) (interchain with G-Cter in SUMO) cross-links involve residues K599 and K629. The segment at 627–649 (RIKHESSSSDEEHAAAKPSGSSH) is disordered. Residues 628–641 (IKHESSSSDEEHAA) are compositionally biased toward basic and acidic residues. K629 carries the post-translational modification N6-acetyllysine. Residues S634 and S635 each carry the phosphoserine modification. The segment at 658–864 (YKKTLRLTSE…VNPKGELVQE (207 aa)) is C-LIP. Residues 712–716 (DIDGT) carry the DXDXT motif motif. The short motif at 723 to 727 (LGHIL) is the LXXIL motif element. Residues S921 and S923 each carry the phosphoserine modification.

It belongs to the lipin family. In terms of assembly, interacts (via LXXIL motif) with PPARA. Interacts with PPARGC1A. Interaction with PPARA and PPARGC1A leads to the formation of a complex that modulates gene transcription. Interacts with MEF2C. Requires Mg(2+) as cofactor. In terms of processing, phosphorylated at multiple sites in response to insulin. Phosphorylation is controlled by the mTOR signaling pathway. Phosphorylation is decreased by epinephrine. Phosphorylation may not directly affect the catalytic activity but may regulate the localization. Dephosphorylated by the CTDNEP1-CNEP1R1 complex. Post-translationally, phosphorylated at multiple sites by mTOR in response to insulin, leading to its inactivation. Phosphorylation does not affect the catalytic activity but regulates the localization. Phosphorylation is decreased by epinephrine. Dephosphorylated by the CTDNEP1-CNEP1R1 complex. Dephosphorylation following mTOR inhibition promotes its activity. Sumoylation is important in brain and is marginal in other tissues. Sumoylation facilitates nuclear localization of isoform 2 in neuronals cells and its transcriptional coactivator activity. In terms of processing, acetylation at Lys-459 and Lys-629 by KAT5 in response to fatty acids promotes translocation to the endoplasmic reticulum and synthesis of diacylglycerol. As to expression, specifically expressed in skeletal muscle. Also expressed prominently in adipose tissue, and testis. Lower expression also detected in kidney, lung, brain and liver. In terms of tissue distribution, predominant isoform in the liver. Predominant isoform in the brain.

Its subcellular location is the mitochondrion outer membrane. It localises to the cytoplasm. The protein localises to the nucleus membrane. The protein resides in the nucleus. It is found in the endoplasmic reticulum membrane. It carries out the reaction a 1,2-diacyl-sn-glycero-3-phosphate + H2O = a 1,2-diacyl-sn-glycerol + phosphate. It catalyses the reaction 1-octadecanoyl-2-(4Z,7Z,10Z,13Z,16Z,19Z-docosahexaenoyl)-sn-glycero-3-phosphate + H2O = 1-octadecanoyl-2-(4Z,7Z,10Z,13Z,16Z,19Z-docosahexaenoyl)-sn-glycerol + phosphate. The enzyme catalyses 1-octadecanoyl-2-(5Z,8Z,11Z,14Z-eicosatetraenoyl)-sn-glycero-3-phosphate + H2O = 1-octadecanoyl-2-(5Z,8Z,11Z,14Z-eicosatetraenoyl)-sn-glycerol + phosphate. The catalysed reaction is 1-octadecanoyl-2-(9Z,12Z-octadecadienoyl)-sn-glycero-3-phosphate + H2O = 1-octadecanoyl-2-(9Z,12Z)-octadecadienoyl-sn-glycerol + phosphate. It carries out the reaction 1-octadecanoyl-2-(9Z-octadecenoyl)-sn-glycero-3-phosphate + H2O = 1-octadecanoyl-2-(9Z-octadecenoyl)-sn-glycerol + phosphate. It catalyses the reaction 1-hexadecanoyl-2-(4Z,7Z,10Z,13Z,16Z,19Z-docosahexaenoyl)-sn-glycero-3-phosphate + H2O = 1-hexadecanoyl-2-(4Z,7Z,10Z,13Z,16Z,19Z-docosahexaenoyl)-sn-glycerol + phosphate. The enzyme catalyses 1,2-dioctadecanoyl-sn-glycero-3-phosphate + H2O = 1,2-dioctadecanoyl-sn-glycerol + phosphate. The catalysed reaction is 1-hexadecanoyl-2-(5Z,8Z,11Z,14Z-eicosatetraenoyl)-sn-glycero-3-phosphate + H2O = 1-hexadecanoyl-2-(5Z,8Z,11Z,14Z-eicosatetraenoyl)-sn-glycerol + phosphate. It carries out the reaction 1-hexadecanoyl-2-(9Z,12Z-octadecadienoyl)-sn-glycero-3-phosphate + H2O = 1-hexadecanoyl-2-(9Z,12Z-octadecadienoyl)-sn-glycerol + phosphate. It catalyses the reaction 1-hexadecanoyl-2-(9Z-octadecenoyl)-sn-glycero-3-phosphate + H2O = 1-hexadecanoyl-2-(9Z-octadecenoyl)-sn-glycerol + phosphate. The enzyme catalyses 1,2-di-(4Z,7Z,10Z,13Z,16Z,19Z-docosahexaenoyl)-sn-glycero-3-phosphate + H2O = 1,2-di-(4Z,7Z,10Z,13Z,16Z,19Z-docosahexaenoyl)-sn-glycerol + phosphate. The catalysed reaction is 1,2-di-(5Z,8Z,11Z,14Z)-eicosatetraenoyl-sn-glycero-3-phosphate + H2O = 1,2-di-(5Z,8Z,11Z,14Z)-eicosatetraenoyl-sn-glycerol + phosphate. It carries out the reaction 1,2-di-(9Z,12Z-octadecadienoyl)-sn-glycero-3-phosphate + H2O = 1,2-di-(9Z,12Z-octadecadienoyl)-sn-glycerol + phosphate. It catalyses the reaction 1,2-di-(9Z-octadecenoyl)-sn-glycero-3-phosphate + H2O = 1,2-di-(9Z-octadecenoyl)-sn-glycerol + phosphate. The enzyme catalyses 1,2-dihexadecanoyl-sn-glycero-3-phosphate + H2O = 1,2-dihexadecanoyl-sn-glycerol + phosphate. Its activity is regulated as follows. Inhibited by N-ethylmaleimide treatment. Functionally, acts as a magnesium-dependent phosphatidate phosphatase enzyme which catalyzes the conversion of phosphatidic acid to diacylglycerol during triglyceride, phosphatidylcholine and phosphatidylethanolamine biosynthesis and therefore controls the metabolism of fatty acids at different levels. Is involved in adipocyte differentiation. Also acts as nuclear transcriptional coactivator for PPARGC1A/PPARA regulatory pathway to modulate lipid metabolism gene expression. Its function is as follows. Recruited at the mitochondrion outer membrane and is involved in mitochondrial fission by converting phosphatidic acid to diacylglycerol. In Mus musculus (Mouse), this protein is Phosphatidate phosphatase LPIN1 (Lpin1).